The following is a 311-amino-acid chain: Pyrimidine-specific ribonucleoside hydrolase RihA (311 aa).

The active site involves His240.

It belongs to the IUNH family. RihA subfamily.

In terms of biological role, hydrolyzes cytidine or uridine to ribose and cytosine or uracil, respectively. The polypeptide is Pyrimidine-specific ribonucleoside hydrolase RihA (Salmonella enteritidis PT4 (strain P125109)).